The chain runs to 345 residues: uncharacterized protein (345 aa).

A compositionally biased stretch (polar residues) spans Met-1–Ile-13. A disordered region spans residues Met-1 to Asp-23. A coiled-coil region spans residues Ser-283–Ala-316.

The protein resides in the virion. This is an uncharacterized protein from Acanthamoeba polyphaga mimivirus (APMV).